Reading from the N-terminus, the 92-residue chain is MSASFDRYVSFQHCDWEGRSERVMQRLQRHVEAAENPFWAYFAQKRAELRDKQGLDDLRILHNYLPTLRELLEDNGDLETLEMLEDLEANLM.

Belongs to the CowN family.

In terms of biological role, is required to sustain N(2)-dependent growth in the presence of low levels of carbon monoxide (CO). Probably acts by protecting the N(2) fixation ability of the nitrogenase complex, which is inactivated in the presence of CO. In Rhodopseudomonas palustris (strain ATCC BAA-98 / CGA009), this protein is N(2)-fixation sustaining protein CowN.